A 275-amino-acid polypeptide reads, in one-letter code: Large ribosomal subunit protein uL2 (275 aa).

Disordered regions lie at residues 28 to 49 (APHAALVESQSRSGGRNHHGRI) and 224 to 246 (AMNPVDHPHGGGEAKAGQGNPHP).

The protein belongs to the universal ribosomal protein uL2 family. In terms of assembly, part of the 50S ribosomal subunit. Forms a bridge to the 30S subunit in the 70S ribosome.

Functionally, one of the primary rRNA binding proteins. Required for association of the 30S and 50S subunits to form the 70S ribosome, for tRNA binding and peptide bond formation. It has been suggested to have peptidyltransferase activity; this is somewhat controversial. Makes several contacts with the 16S rRNA in the 70S ribosome. In Stenotrophomonas maltophilia (strain R551-3), this protein is Large ribosomal subunit protein uL2.